The sequence spans 238 residues: uncharacterized protein (238 aa).

This is an uncharacterized protein from Methanocaldococcus jannaschii (strain ATCC 43067 / DSM 2661 / JAL-1 / JCM 10045 / NBRC 100440) (Methanococcus jannaschii).